The sequence spans 136 residues: Large-conductance mechanosensitive channel (136 aa).

2 helical membrane passes run 9-29 (AFASRGNVIDMAVGIIIGAAF) and 79-99 (IQTIIDFTIIAFAIFMGLKAI).

The protein belongs to the MscL family. As to quaternary structure, homopentamer.

The protein resides in the cell inner membrane. Channel that opens in response to stretch forces in the membrane lipid bilayer. May participate in the regulation of osmotic pressure changes within the cell. The protein is Large-conductance mechanosensitive channel of Shewanella sp. (strain ANA-3).